The sequence spans 317 residues: Ribosomal protein L11 methyltransferase (317 aa).

Residues T158, G179, D201, and N244 each coordinate S-adenosyl-L-methionine.

This sequence belongs to the methyltransferase superfamily. PrmA family.

It is found in the cytoplasm. The catalysed reaction is L-lysyl-[protein] + 3 S-adenosyl-L-methionine = N(6),N(6),N(6)-trimethyl-L-lysyl-[protein] + 3 S-adenosyl-L-homocysteine + 3 H(+). Methylates ribosomal protein L11. This is Ribosomal protein L11 methyltransferase from Lactococcus lactis subsp. cremoris (strain MG1363).